The primary structure comprises 476 residues: CDK5 and ABL1 enzyme substrate 2 (476 aa).

The interval 1 to 119 is disordered; sequence MAAAAAGGAP…GLGLDGQRQR (119 aa). Residues 30 to 40 are compositionally biased toward basic residues; it reads PRRRGDSRRRQ. A compositionally biased stretch (pro residues) spans 65-96; that stretch reads PAPPPPPPTEAREAPAPPPAPPGGLPGLPARP. Serine 128 and serine 206 each carry phosphoserine. A disordered region spans residues 256 to 295; the sequence is DSHGLLPQPRPSIPRAPPGSRHKPVPTKSTPAGTELGSDG. Over residues 263 to 272 the composition is skewed to pro residues; the sequence is QPRPSIPRAP.

It belongs to the cyclin family. In terms of assembly, binds to CDK3, CDK5 and ABL1. The C-terminal cyclin-box-like region binds to CDK5. In terms of tissue distribution, widely expressed.

Unknown. Probably involved in G1-S cell cycle transition. This chain is CDK5 and ABL1 enzyme substrate 2 (Cables2), found in Mus musculus (Mouse).